The following is a 341-amino-acid chain: S-adenosylmethionine:tRNA ribosyltransferase-isomerase (341 aa).

The protein belongs to the QueA family. Monomer.

The protein resides in the cytoplasm. The catalysed reaction is 7-aminomethyl-7-carbaguanosine(34) in tRNA + S-adenosyl-L-methionine = epoxyqueuosine(34) in tRNA + adenine + L-methionine + 2 H(+). The protein operates within tRNA modification; tRNA-queuosine biosynthesis. Its function is as follows. Transfers and isomerizes the ribose moiety from AdoMet to the 7-aminomethyl group of 7-deazaguanine (preQ1-tRNA) to give epoxyqueuosine (oQ-tRNA). The protein is S-adenosylmethionine:tRNA ribosyltransferase-isomerase of Clostridium botulinum (strain ATCC 19397 / Type A).